Reading from the N-terminus, the 342-residue chain is GTPase Obg (342 aa).

The Obg domain occupies 1-159; that stretch reads MKFIDEAKIY…RWIRLELKLL (159 aa). Residues 160 to 332 enclose the OBG-type G domain; sequence ADVGIIGLPN…LLYKIGEALK (173 aa). Residues 166-173, 191-195, 214-217, 284-287, and 313-315 contribute to the GTP site; these read GLPNVGKS, FTTLT, DIPG, NKTD, and SAA. Mg(2+) contacts are provided by S173 and T193.

It belongs to the TRAFAC class OBG-HflX-like GTPase superfamily. OBG GTPase family. Monomer. Mg(2+) serves as cofactor.

Its subcellular location is the cytoplasm. In terms of biological role, an essential GTPase which binds GTP, GDP and possibly (p)ppGpp with moderate affinity, with high nucleotide exchange rates and a fairly low GTP hydrolysis rate. Plays a role in control of the cell cycle, stress response, ribosome biogenesis and in those bacteria that undergo differentiation, in morphogenesis control. This chain is GTPase Obg, found in Syntrophus aciditrophicus (strain SB).